The chain runs to 234 residues: Chromatin remodeling protein EBS (234 aa).

A BAH domain is found at Lys-29–Arg-144. The segment at Ala-146–Asp-197 adopts a PHD-type zinc-finger fold.

Belongs to the SHL1/EBS protein family. In terms of assembly, recognizes di- and trimethylated histone H3 at lysine 4 (H3K4me2 and H3K4me3). Interacts with HDA6. Expressed ubiquitously, with higher levels in floral buds.

The protein resides in the nucleus. Functionally, chromatin remodeling factor that binds to methylated histone (e.g. H3K4me2/3) to prevent their acetylation (e.g. H3K9K14Ac), likely by recruiting histone deacetylase (HDAC) complexes, and thus regulating the transcription of target genes. Negative regulator in developmental processes in a gibberellic acid- (GA-) dependent manner, such as germination, flowering induction, and flower organ specification, probably by modulating developmental gene expression. Involved in the chromatin-mediated repression of floral initiation and controls genes regulating flowering. Negatively regulates the expression of the floral integrator FT epigenetically, by preventing high levels of H3 acetylation, thus maintaining an inactive chromatin conformation at FT locus. This is Chromatin remodeling protein EBS from Arabidopsis thaliana (Mouse-ear cress).